The sequence spans 830 residues: Cyclin-dependent kinase inhibitor FAR1 (830 aa).

The tract at residues 1–31 (MKTPTRVSFEKKIHTPPSGDRDAERSPPKKF) is disordered. Residues 8 to 27 (SFEKKIHTPPSGDRDAERSP) are compositionally biased toward basic and acidic residues. Residue Ser87 is modified to Phosphoserine; by CDC28. Ser110 and Ser114 each carry phosphoserine. An RING-type zinc finger spans residues 202–252 (CLICEESISSTFTGEKVVESTCSHTSHYNCYLMLFETLYFQGKFPECKICG). Thr306 is modified (phosphothreonine).

As to quaternary structure, associates with the CDC28-CLN complex. Thought to be phosphorylated by MAP kinase FUS3. Thought to enhance the binding of FAR1 to G1-specific cyclin-dependent kinase (CDK) complexes.

Functionally, inhibitor of the cyclin-dependent kinase CDC28. Necessary for cell cycle arrest. Involved in pheromone response. Contributes to mating efficiency. Required for oriented polarization of yeast cells in response to mating pheromones. This is Cyclin-dependent kinase inhibitor FAR1 (FAR1) from Saccharomyces cerevisiae (strain ATCC 204508 / S288c) (Baker's yeast).